We begin with the raw amino-acid sequence, 536 residues long: ADP,ATP carrier protein 4 (536 aa).

A run of 9 helical transmembrane segments spans residues 44 to 64 (VLLF…LYVL), 77 to 97 (SILF…IVIV), 109 to 129 (MLEV…FVIW), 172 to 194 (TMLY…FSRA), 205 to 225 (KFLP…GLLT), 244 to 264 (FSQV…TSFF), 309 to 329 (VVAA…GIVL), 349 to 369 (AQII…THLI), and 378 to 398 (AITA…MVFF). Asn-400 and Asn-421 each carry an N-linked (GlcNAc...) asparagine glycan. 2 helical membrane-spanning segments follow: residues 465 to 485 (LGIN…TVVF) and 493 to 513 (VVSV…RSIL).

The protein belongs to the ADP/ATP translocase tlc family.

Its subcellular location is the cell membrane. Its function is as follows. ATP transporter involved in the uptake of ATP from the host cell cytoplasm. Provides the microsporidian cell with host ATP in exchange for ADP. This is an obligate exchange system. This energy acquiring activity is an important component of microsporidian parasitism. This chain is ADP,ATP carrier protein 4 (NTT4), found in Encephalitozoon cuniculi (strain GB-M1) (Microsporidian parasite).